A 392-amino-acid polypeptide reads, in one-letter code: Bifunctional enzyme IspD/IspF (392 aa).

2-C-methyl-D-erythritol 4-phosphate cytidylyltransferase regions lie at residues 1–234 (MTES…MMRT) and 1–235 (MTES…MRTA). A 2-C-methyl-D-erythritol 2,4-cyclodiphosphate synthase region spans residues 235-392 (AVGMGYDVHR…AVATIQLPET (158 aa)). The a divalent metal cation site is built by Asp241 and His243. Residues 241–243 (DVH) and 267–268 (HS) contribute to the 4-CDP-2-C-methyl-D-erythritol 2-phosphate site. Position 275 (His275) interacts with a divalent metal cation. 4-CDP-2-C-methyl-D-erythritol 2-phosphate-binding positions include 289-291 (DIG), 365-368 (TTTE), Phe372, and Arg375.

In the N-terminal section; belongs to the IspD/TarI cytidylyltransferase family. IspD subfamily. It in the C-terminal section; belongs to the IspF family. A divalent metal cation is required as a cofactor.

The catalysed reaction is 2-C-methyl-D-erythritol 4-phosphate + CTP + H(+) = 4-CDP-2-C-methyl-D-erythritol + diphosphate. The enzyme catalyses 4-CDP-2-C-methyl-D-erythritol 2-phosphate = 2-C-methyl-D-erythritol 2,4-cyclic diphosphate + CMP. Its pathway is isoprenoid biosynthesis; isopentenyl diphosphate biosynthesis via DXP pathway; isopentenyl diphosphate from 1-deoxy-D-xylulose 5-phosphate: step 2/6. The protein operates within isoprenoid biosynthesis; isopentenyl diphosphate biosynthesis via DXP pathway; isopentenyl diphosphate from 1-deoxy-D-xylulose 5-phosphate: step 4/6. Bifunctional enzyme that catalyzes the formation of 4-diphosphocytidyl-2-C-methyl-D-erythritol from CTP and 2-C-methyl-D-erythritol 4-phosphate (MEP) (IspD), and catalyzes the conversion of 4-diphosphocytidyl-2-C-methyl-D-erythritol 2-phosphate (CDP-ME2P) to 2-C-methyl-D-erythritol 2,4-cyclodiphosphate (ME-CPP) with a corresponding release of cytidine 5-monophosphate (CMP) (IspF). This chain is Bifunctional enzyme IspD/IspF, found in Sphingopyxis alaskensis (strain DSM 13593 / LMG 18877 / RB2256) (Sphingomonas alaskensis).